The chain runs to 305 residues: UDP-N-acetylenolpyruvoylglucosamine reductase 2 (305 aa).

The FAD-binding PCMH-type domain occupies 33–197 (VGGKADVFVA…LEARFELEEG (165 aa)). Arginine 176 is a catalytic residue. The Proton donor role is filled by serine 226. Glutamate 296 is an active-site residue.

It belongs to the MurB family. It depends on FAD as a cofactor.

It is found in the cytoplasm. It catalyses the reaction UDP-N-acetyl-alpha-D-muramate + NADP(+) = UDP-N-acetyl-3-O-(1-carboxyvinyl)-alpha-D-glucosamine + NADPH + H(+). It participates in cell wall biogenesis; peptidoglycan biosynthesis. Cell wall formation. The sequence is that of UDP-N-acetylenolpyruvoylglucosamine reductase 2 from Bacillus cereus (strain ZK / E33L).